The chain runs to 317 residues: Glutathione synthetase (317 aa).

The ATP-grasp domain occupies 125–311; it reads EKMFATLFPQ…IGGKLMDAID (187 aa). 152–208 lines the ATP pocket; the sequence is TAKHADVILKPLDGMGGTSIFRHRAGDPNLSVILETLTALGTQQIMAQAYLPAIKDG. Mg(2+) contacts are provided by E282 and N284.

It belongs to the prokaryotic GSH synthase family. It depends on Mg(2+) as a cofactor. Requires Mn(2+) as cofactor.

The enzyme catalyses gamma-L-glutamyl-L-cysteine + glycine + ATP = glutathione + ADP + phosphate + H(+). It participates in sulfur metabolism; glutathione biosynthesis; glutathione from L-cysteine and L-glutamate: step 2/2. This chain is Glutathione synthetase, found in Pseudomonas putida (strain ATCC 47054 / DSM 6125 / CFBP 8728 / NCIMB 11950 / KT2440).